A 251-amino-acid chain; its full sequence is Small ribosomal subunit protein uS3 (251 aa).

The KH type-2 domain maps to 39–109; it reads IRNYVQARLK…EVKIDVIEVI (71 aa). Positions 222-239 are enriched in basic and acidic residues; the sequence is LKKIKDRRGEQRSRGRDS. The disordered stretch occupies residues 222–251; that stretch reads LKKIKDRRGEQRSRGRDSRNRRRRKPRQTT. The segment covering 240-251 has biased composition (basic residues); it reads RNRRRRKPRQTT.

Belongs to the universal ribosomal protein uS3 family. As to quaternary structure, part of the 30S ribosomal subunit. Forms a tight complex with proteins S10 and S14.

In terms of biological role, binds the lower part of the 30S subunit head. Binds mRNA in the 70S ribosome, positioning it for translation. The sequence is that of Small ribosomal subunit protein uS3 from Prosthecochloris aestuarii (strain DSM 271 / SK 413).